Reading from the N-terminus, the 526-residue chain is Cytochrome P450 4F5 (526 aa).

Position 470 (Cys-470) interacts with heme.

This sequence belongs to the cytochrome P450 family. It depends on heme as a cofactor. As to expression, high expression in liver and kidney. Lower expression in brain.

It is found in the endoplasmic reticulum membrane. Its subcellular location is the microsome membrane. The enzyme catalyses an organic molecule + reduced [NADPH--hemoprotein reductase] + O2 = an alcohol + oxidized [NADPH--hemoprotein reductase] + H2O + H(+). This is Cytochrome P450 4F5 (Cyp4f5) from Rattus norvegicus (Rat).